The following is a 120-amino-acid chain: Large ribosomal subunit protein bL20 (120 aa).

This sequence belongs to the bacterial ribosomal protein bL20 family.

Functionally, binds directly to 23S ribosomal RNA and is necessary for the in vitro assembly process of the 50S ribosomal subunit. It is not involved in the protein synthesizing functions of that subunit. The sequence is that of Large ribosomal subunit protein bL20 from Cereibacter sphaeroides (strain ATCC 17025 / ATH 2.4.3) (Rhodobacter sphaeroides).